A 178-amino-acid chain; its full sequence is Photosystem I assembly protein Ycf4 (178 aa).

2 helical membrane passes run 19–39 (FLVA…SLSS) and 61–81 (LVMG…WYVI).

Belongs to the Ycf4 family.

The protein resides in the cellular thylakoid membrane. Its function is as follows. Seems to be required for the assembly of the photosystem I complex. The protein is Photosystem I assembly protein Ycf4 of Synechococcus sp. (strain CC9902).